The primary structure comprises 367 residues: Tape measure protein (367 aa).

This sequence belongs to the skunalikevirus tape measure protein family.

Its subcellular location is the virion. Tape measure protein. Serves as a base for tail tube protein polymerization and acts as a template for tail length determination. This is Tape measure protein from Lactococcus lactis (Lactococcus lactis bacteriophage F4-1).